The sequence spans 928 residues: Putative replication origin binding protein (928 aa).

In terms of domain architecture, Helicase ATP-binding spans 386–516 (NIVPPKGHIT…QVLRDILMTA (131 aa)). 399 to 406 (ASLGTGKT) contributes to the ATP binding site. Residues 484–487 (DECD) carry the DEAD box motif.

This sequence belongs to the herpesviridae oribp family.

Displays bipolar ssDNA and dsDNA unwinding activities that require the same core catalytic residues for unwinding in either direction, the 3'-5' direction being more robust. The chain is Putative replication origin binding protein from Escherichia coli (Enterobacteria phage T5).